The following is a 582-amino-acid chain: MATSKGRNADPAAALRDCRAAFIGVGVASALVNLLYLTGSFFMLEVYDRILPSRSIPSLIALSLLALLLYAFQGAFELIRGRMLVRIAGALDESLNGRIYRAIVKAPLKLRMQGDGLQALRDFDQVRSFLSGVGPAALFDLPWLPFYIAICFLFHPVIGLIAIIGGLILTLLTYLTNRGTQAPAKKASEAGGLRNVFAQASQRNAEVVHAMGMSARLTALWERRNTEFRDENRRTSDIGNGYGALSKVFRMALQSGVLAAGAVLVIRGEASPGIIIAGSILTARALAPVELAIGNWRGLVAARQSWQRLKELLNALPEADAPLQLPDPHERLTVEGLASGPPAAQRLVVSDVNFTVRAGGAVGVIGPSASGKSSLARAILGIWPAYRGSVRLDGAALDQWDSDALGKHVGYLPQDVELFAGTIAQNICRFAEDATSEAIVAAAKAARVNDLILRLPNGYDTEIGDGGMTLSAGQRQRVALARALYGDPFLVVLDEPNSNLDAEGEQALSEAIMSVRSRGGIVIVVAHRPSALASVDLVLMMNEGRMQAFGPKEQVLGQVLRPQQVERQNALKVVAEGQEAKQ.

Helical transmembrane passes span F22–F42, L59–I79, and I148–I168. The 280-residue stretch at F22–A301 folds into the ABC transmembrane type-1 domain. The ABC transporter domain occupies L332–Q568. G366–S373 is a binding site for ATP.

The protein belongs to the ABC transporter superfamily. Part of a type I secretion system composed of PrsD and PrsE.

The protein localises to the cell inner membrane. Its function is as follows. Mediates secretion of glycanase ExsH. The sequence is that of Type I secretion system ATP-binding protein PrsD (prsD) from Rhizobium meliloti (strain 1021) (Ensifer meliloti).